A 313-amino-acid chain; its full sequence is Dehydrogenase/reductase SDR family member 1 (313 aa).

Alanine 2 is modified (N-acetylalanine). Isoleucine 19 is a binding site for NAD(+). Arginine 21 carries the omega-N-methylarginine modification. Residue aspartate 64 coordinates NAD(+). Serine 151 provides a ligand contact to substrate. The NAD(+) site is built by tyrosine 163, lysine 167, and threonine 198. Tyrosine 163 functions as the Proton acceptor in the catalytic mechanism. Positions 235–313 are required for ER localization; that stretch reads CVVALATDPN…WIIALYTSKF (79 aa).

The protein belongs to the short-chain dehydrogenases/reductases (SDR) family. Detected in heart, liver, adrenal glands, and at low levels in skeletal muscle, kidney, pancreas and brain.

It localises to the endoplasmic reticulum. It catalyses the reaction 17alpha-estradiol + NADP(+) = estrone + NADPH + H(+). It carries out the reaction testosterone + NADP(+) = androst-4-ene-3,17-dione + NADPH + H(+). The enzyme catalyses prostaglandin E1 + NADPH + H(+) = prostaglandin F1 + NADP(+). The catalysed reaction is isatin + NADPH + H(+) = 3-hydroxyindolin-2-one + NADP(+). Functionally, NADPH-dependent oxidoreductase which catalyzes the reduction of steroids (estrone, androstene-3,17-dione and cortisone) as well as prostaglandin E1, isatin and xenobiotics in vitro. May have a role in steroid and/or xenobiotic metabolism. This chain is Dehydrogenase/reductase SDR family member 1, found in Homo sapiens (Human).